A 112-amino-acid polypeptide reads, in one-letter code: Protein Churchill (112 aa).

Zn(2+) contacts are provided by Cys2, Cys5, Cys30, Cys33, His59, Cys61, Cys64, His66, His71, Cys88, and Cys91.

It belongs to the Churchill family.

Transcriptional activator that mediates FGF signaling during neural development. Plays a role in the regulation of cell movement. Does not bind DNA by itself. This Xenopus laevis (African clawed frog) protein is Protein Churchill (churc1).